The following is a 132-amino-acid chain: Phosphomevalonate dehydratase small subunit (132 aa).

Ser58 (proton acceptor) is an active-site residue.

Belongs to the AcnX type II small subunit family. Heterodimer composed of a large subunit (PMDh-L) and a small subunit (PMDh-S).

The catalysed reaction is (R)-5-phosphomevalonate = (2E)-3-methyl-5-phosphooxypent-2-enoate + H2O. The protein operates within isoprenoid biosynthesis; isopentenyl diphosphate biosynthesis via mevalonate pathway. Neither the addition of 1 mM Mg(2+) nor 1 mM Mn(2+) has a significant effect on the activity, whereas Zn(2+) causes almost complete inactivation. Strongly inhibited by H(2)O(2), but not by EDTA or iodoacetamide. In terms of biological role, component of a hydro-lyase that catalyzes the dehydration of mevalonate 5-phosphate (MVA5P) to form trans-anhydromevalonate 5-phosphate (tAHMP). Involved in the archaeal mevalonate (MVA) pathway, which provides fundamental precursors for isoprenoid biosynthesis, such as isopentenyl diphosphate (IPP) and dimethylallyl diphosphate (DMAPP). The sequence is that of Phosphomevalonate dehydratase small subunit from Aeropyrum pernix (strain ATCC 700893 / DSM 11879 / JCM 9820 / NBRC 100138 / K1).